The primary structure comprises 45 residues: Large ribosomal subunit protein bL34 (45 aa).

Residues 1 to 10 (MTQRTLGGTN) show a composition bias toward polar residues. Residues 1–45 (MTQRTLGGTNRKQKRTSGFRARMRTHNGRKVIQARRSKGRHRLAV) form a disordered region. The span at 11–45 (RKQKRTSGFRARMRTHNGRKVIQARRSKGRHRLAV) shows a compositional bias: basic residues.

Belongs to the bacterial ribosomal protein bL34 family.

The sequence is that of Large ribosomal subunit protein bL34 (rpmH) from Synechocystis sp. (strain ATCC 27184 / PCC 6803 / Kazusa).